Reading from the N-terminus, the 1662-residue chain is Putative mediator of RNA polymerase II transcription subunit 23 (1662 aa).

Disordered stretches follow at residues 1–24 (MYTN…PQQQ), 95–139 (QQRP…QSQP), 206–252 (TTTP…STTN), and 1530–1572 (GYDD…QDTN). Residues 39–122 (QQQNIQQQQQ…QQSQQQQASL (84 aa)) adopt a coiled-coil conformation. Over residues 95–124 (QQRPQTPQQNAQQQSQQSQQSQQQQASLGQ) the composition is skewed to low complexity. The segment covering 1532-1560 (DDDDDDEDDDYYDEDDEDEDDDNEDDQQD) has biased composition (acidic residues).

This sequence belongs to the Mediator complex subunit 23 family. In terms of assembly, component of the Mediator complex.

It is found in the nucleus. In terms of biological role, component of the Mediator complex, a coactivator involved in the regulated transcription of nearly all RNA polymerase II-dependent genes. Mediator functions as a bridge to convey information from gene-specific regulatory proteins to the basal RNA polymerase II transcription machinery. Mediator is recruited to promoters by direct interactions with regulatory proteins and serves as a scaffold for the assembly of a functional preinitiation complex with RNA polymerase II and the general transcription factors. The sequence is that of Putative mediator of RNA polymerase II transcription subunit 23 (med23) from Dictyostelium discoideum (Social amoeba).